The chain runs to 217 residues: Adenylate kinase (217 aa).

10–15 contributes to the ATP binding site; it reads GAGKGT. The segment at 30-59 is NMP; it reads STGDMFREAIKRGTPLGRQAEVYIKGGRLV. AMP-binding positions include T31, R36, 57-59, 85-88, and Q92; these read RLV and GFPR. Positions 126–163 are LID; the sequence is GRRVCRQCGATYHVRYNPPAVPGKCDACGQDLVQRADD. R127 is a binding site for ATP. The Zn(2+) site is built by C130 and C133. 136 to 137 contributes to the ATP binding site; sequence TY. Zn(2+)-binding residues include C150 and C153. 2 residues coordinate AMP: R160 and R171. Q199 serves as a coordination point for ATP.

The protein belongs to the adenylate kinase family. In terms of assembly, monomer.

It is found in the cytoplasm. It catalyses the reaction AMP + ATP = 2 ADP. Its pathway is purine metabolism; AMP biosynthesis via salvage pathway; AMP from ADP: step 1/1. Its function is as follows. Catalyzes the reversible transfer of the terminal phosphate group between ATP and AMP. Plays an important role in cellular energy homeostasis and in adenine nucleotide metabolism. The sequence is that of Adenylate kinase from Moorella thermoacetica (strain ATCC 39073 / JCM 9320).